Reading from the N-terminus, the 202-residue chain is Na(+)-translocating NADH-quinone reductase subunit E (202 aa).

6 consecutive transmembrane segments (helical) span residues S11–I31, I35–V55, F81–V101, G114–V134, V144–I164, and I182–L202.

It belongs to the NqrDE/RnfAE family. In terms of assembly, composed of six subunits; NqrA, NqrB, NqrC, NqrD, NqrE and NqrF.

The protein resides in the cell inner membrane. It catalyses the reaction a ubiquinone + n Na(+)(in) + NADH + H(+) = a ubiquinol + n Na(+)(out) + NAD(+). In terms of biological role, NQR complex catalyzes the reduction of ubiquinone-1 to ubiquinol by two successive reactions, coupled with the transport of Na(+) ions from the cytoplasm to the periplasm. NqrA to NqrE are probably involved in the second step, the conversion of ubisemiquinone to ubiquinol. In Saccharophagus degradans (strain 2-40 / ATCC 43961 / DSM 17024), this protein is Na(+)-translocating NADH-quinone reductase subunit E.